A 951-amino-acid chain; its full sequence is Valine--tRNA ligase (951 aa).

The 'HIGH' region motif lies at 42–52 (PNVTGSLHMGH). The short motif at 554-558 (KMSKS) is the 'KMSKS' region element. K557 provides a ligand contact to ATP. A coiled-coil region spans residues 880–944 (AGLINKEDEL…AEAKAKLIEQ (65 aa)).

It belongs to the class-I aminoacyl-tRNA synthetase family. ValS type 1 subfamily. In terms of assembly, monomer.

It is found in the cytoplasm. The catalysed reaction is tRNA(Val) + L-valine + ATP = L-valyl-tRNA(Val) + AMP + diphosphate. Catalyzes the attachment of valine to tRNA(Val). As ValRS can inadvertently accommodate and process structurally similar amino acids such as threonine, to avoid such errors, it has a 'posttransfer' editing activity that hydrolyzes mischarged Thr-tRNA(Val) in a tRNA-dependent manner. In Shigella flexneri, this protein is Valine--tRNA ligase.